The following is a 120-amino-acid chain: NAD(P)H-quinone oxidoreductase subunit 3, chloroplastic (120 aa).

Transmembrane regions (helical) follow at residues Ile9–Gly29, Met64–Met84, and Val88–Ser108.

Belongs to the complex I subunit 3 family. As to quaternary structure, NDH is composed of at least 16 different subunits, 5 of which are encoded in the nucleus.

Its subcellular location is the plastid. It localises to the chloroplast thylakoid membrane. It carries out the reaction a plastoquinone + NADH + (n+1) H(+)(in) = a plastoquinol + NAD(+) + n H(+)(out). The enzyme catalyses a plastoquinone + NADPH + (n+1) H(+)(in) = a plastoquinol + NADP(+) + n H(+)(out). In terms of biological role, NDH shuttles electrons from NAD(P)H:plastoquinone, via FMN and iron-sulfur (Fe-S) centers, to quinones in the photosynthetic chain and possibly in a chloroplast respiratory chain. The immediate electron acceptor for the enzyme in this species is believed to be plastoquinone. Couples the redox reaction to proton translocation, and thus conserves the redox energy in a proton gradient. In Amborella trichopoda, this protein is NAD(P)H-quinone oxidoreductase subunit 3, chloroplastic.